The sequence spans 318 residues: 4-diphosphocytidyl-2-C-methyl-D-erythritol kinase (318 aa).

K13 is an active-site residue. Residue 101-111 (PVAGGMAGGSA) coordinates ATP. D143 is a catalytic residue. The segment at 298–318 (PGARLVTDDRADRPTPPQVHA) is disordered.

This sequence belongs to the GHMP kinase family. IspE subfamily.

The catalysed reaction is 4-CDP-2-C-methyl-D-erythritol + ATP = 4-CDP-2-C-methyl-D-erythritol 2-phosphate + ADP + H(+). Its pathway is isoprenoid biosynthesis; isopentenyl diphosphate biosynthesis via DXP pathway; isopentenyl diphosphate from 1-deoxy-D-xylulose 5-phosphate: step 3/6. Functionally, catalyzes the phosphorylation of the position 2 hydroxy group of 4-diphosphocytidyl-2C-methyl-D-erythritol. The polypeptide is 4-diphosphocytidyl-2-C-methyl-D-erythritol kinase (Saccharopolyspora erythraea (strain ATCC 11635 / DSM 40517 / JCM 4748 / NBRC 13426 / NCIMB 8594 / NRRL 2338)).